The primary structure comprises 195 residues: HTH-type transcriptional regulator BetI (195 aa).

Residues 8–68 form the HTH tetR-type domain; that stretch reads SIRRRQLIDA…ATMRDITSQL (61 aa). A DNA-binding region (H-T-H motif) is located at residues 31–50; the sequence is TIAQIARRAGVSTGIISHYF.

Its pathway is amine and polyamine biosynthesis; betaine biosynthesis via choline pathway [regulation]. Its function is as follows. Repressor involved in the biosynthesis of the osmoprotectant glycine betaine. It represses transcription of the choline transporter BetT and the genes of BetAB involved in the synthesis of glycine betaine. This is HTH-type transcriptional regulator BetI from Escherichia coli O8 (strain IAI1).